We begin with the raw amino-acid sequence, 771 residues long: U3 small nucleolar RNA-associated protein 14 homolog A (771 aa).

A disordered region spans residues 23–49 (PKDYLLSESEDEGDNDGERKHQKLLEA). Serine 29, serine 31, serine 52, serine 77, and serine 81 each carry phosphoserine. The stretch at 40 to 67 (ERKHQKLLEAISSLDGKNRRKLAERSEA) forms a coiled coil. A Glycyl lysine isopeptide (Lys-Gly) (interchain with G-Cter in SUMO2) cross-link involves residue lysine 122. Threonine 205 carries the phosphothreonine modification. Coiled coils occupy residues 216–290 (SLEE…EKAR) and 317–347 (LEAR…EEEE). Disordered regions lie at residues 334–355 (TQKL…DVEE) and 367–557 (MNAD…KKEQ). A compositionally biased stretch (acidic residues) spans 342–355 (ESEEEEGGTEDVEE). Over residues 399-436 (LEAHGVSESEGEERPVAEEEILLREFEERRSLRKRSEL) the composition is skewed to basic and acidic residues. A phosphoserine mark is found at serine 405 and serine 407. Position 433 is a citrulline (arginine 433). 2 positions are modified to phosphoserine: serine 437 and serine 445. Lysine 449 is covalently cross-linked (Glycyl lysine isopeptide (Lys-Gly) (interchain with G-Cter in SUMO2)). Serine 453 carries the phosphoserine modification. A compositionally biased stretch (basic and acidic residues) spans 504–529 (RPERVQTLEELEELGKEECFQNKELP). Lysine 519 participates in a covalent cross-link: Glycyl lysine isopeptide (Lys-Gly) (interchain with G-Cter in SUMO2). Positions 535-544 (GQQSERTPNN) are enriched in polar residues. Over residues 547 to 557 (DAPKEKKKKEQ) the composition is skewed to basic and acidic residues. Serine 569 carries the phosphoserine modification. Arginine 589 carries the citrulline modification. Residue lysine 733 forms a Glycyl lysine isopeptide (Lys-Gly) (interchain with G-Cter in SUMO2) linkage. Polar residues predominate over residues 740 to 751 (RSSSRSDLSVIQ). The tract at residues 740–771 (RSSSRSDLSVIQRNPKRITTRHKKQLKKCSVD) is disordered. Residues 753-771 (NPKRITTRHKKQLKKCSVD) show a composition bias toward basic residues.

This sequence belongs to the UTP14 family. In terms of assembly, interacts with DHX37. In terms of processing, citrullinated by PADI4. In terms of tissue distribution, ubiquitously expressed.

The protein resides in the nucleus. The protein localises to the nucleolus. Functionally, may be required for ribosome biogenesis. The chain is U3 small nucleolar RNA-associated protein 14 homolog A (UTP14A) from Homo sapiens (Human).